We begin with the raw amino-acid sequence, 372 residues long: Long-tail fiber protein gp35 (372 aa).

In terms of domain architecture, GG-type lectin spans 22–193; sequence NSVRYKISIA…VGATGFPRGT (172 aa).

In terms of assembly, the long-tail fibers are trimeric, with a stoichiometry of gp34/gp37/gp36/gp35 of 3:3:3:1.

It is found in the virion. In terms of biological role, structural component of the distal-half of the long-tail fiber. The long-tail fiber of T4 is about 1600 Angstroms long with a kink in the middle that divides the fiber into proximal and distal halves. The latter hinge is probably composed of gp35 protein. This chain is Long-tail fiber protein gp35 (35), found in Enterobacteria phage T4 (Bacteriophage T4).